The following is a 269-amino-acid chain: Spermatogenesis-associated serine-rich protein 1 (269 aa).

Positions 1 to 14 (MESSKDTQHGDALE) are enriched in basic and acidic residues. The tract at residues 1–92 (MESSKDTQHG…SKVSLPEIPK (92 aa)) is disordered. A compositionally biased stretch (polar residues) spans 18–38 (CLANRTSSRQNKRTSLSSSDG). A Phosphothreonine modification is found at threonine 54. Residues 67–86 (SSSSSSSSSSAQSNRSSKVS) are compositionally biased toward low complexity. Residues serine 72, serine 75, and serine 82 each carry the phosphoserine modification.

The chain is Spermatogenesis-associated serine-rich protein 1 (Spats1) from Mus musculus (Mouse).